The following is a 194-amino-acid chain: Holliday junction branch migration complex subunit RuvA (194 aa).

Residues 1-64 (MIGRLRGILA…EDSVSLYGFL (64 aa)) form a domain I region. The interval 65–140 (REGERRLFRD…RAADFSSGAP (76 aa)) is domain II. Residues 140 to 144 (PITGQ) form a flexible linker region. Residues 145–194 (LGPDAVSEATVALQQLGYKPAEAARMARDAGAEGDEVATVIRKALQAALR) form a domain III region.

This sequence belongs to the RuvA family. In terms of assembly, homotetramer. Forms an RuvA(8)-RuvB(12)-Holliday junction (HJ) complex. HJ DNA is sandwiched between 2 RuvA tetramers; dsDNA enters through RuvA and exits via RuvB. An RuvB hexamer assembles on each DNA strand where it exits the tetramer. Each RuvB hexamer is contacted by two RuvA subunits (via domain III) on 2 adjacent RuvB subunits; this complex drives branch migration. In the full resolvosome a probable DNA-RuvA(4)-RuvB(12)-RuvC(2) complex forms which resolves the HJ.

The protein localises to the cytoplasm. In terms of biological role, the RuvA-RuvB-RuvC complex processes Holliday junction (HJ) DNA during genetic recombination and DNA repair, while the RuvA-RuvB complex plays an important role in the rescue of blocked DNA replication forks via replication fork reversal (RFR). RuvA specifically binds to HJ cruciform DNA, conferring on it an open structure. The RuvB hexamer acts as an ATP-dependent pump, pulling dsDNA into and through the RuvAB complex. HJ branch migration allows RuvC to scan DNA until it finds its consensus sequence, where it cleaves and resolves the cruciform DNA. The protein is Holliday junction branch migration complex subunit RuvA of Xanthomonas axonopodis pv. citri (strain 306).